The chain runs to 370 residues: tRNA-specific 2-thiouridylase MnmA (370 aa).

ATP-binding positions include 10 to 17 and Met36; that span reads AMSGGVDS. Cys111 functions as the Nucleophile in the catalytic mechanism. Cys111 and Cys209 are joined by a disulfide. An ATP-binding site is contributed by Gly135. An interaction with tRNA region spans residues 159–161; it reads KDQ. Cys209 serves as the catalytic Cysteine persulfide intermediate.

Belongs to the MnmA/TRMU family.

The protein resides in the cytoplasm. It catalyses the reaction S-sulfanyl-L-cysteinyl-[protein] + uridine(34) in tRNA + AH2 + ATP = 2-thiouridine(34) in tRNA + L-cysteinyl-[protein] + A + AMP + diphosphate + H(+). Catalyzes the 2-thiolation of uridine at the wobble position (U34) of tRNA, leading to the formation of s(2)U34. The protein is tRNA-specific 2-thiouridylase MnmA of Koribacter versatilis (strain Ellin345).